Consider the following 341-residue polypeptide: Methionine import ATP-binding protein MetN 3 (341 aa).

Residues 2–241 (IEFQNVTKTF…PSHETTKRFI (240 aa)) form the ABC transporter domain. ATP is bound at residue 38 to 45 (GFSGAGKS).

This sequence belongs to the ABC transporter superfamily. Methionine importer (TC 3.A.1.24) family. The complex is composed of two ATP-binding proteins (MetN), two transmembrane proteins (MetI) and a solute-binding protein (MetQ).

It is found in the cell membrane. The catalysed reaction is L-methionine(out) + ATP + H2O = L-methionine(in) + ADP + phosphate + H(+). The enzyme catalyses D-methionine(out) + ATP + H2O = D-methionine(in) + ADP + phosphate + H(+). Its function is as follows. Part of the ABC transporter complex MetNIQ involved in methionine import. Responsible for energy coupling to the transport system. This chain is Methionine import ATP-binding protein MetN 3, found in Oceanobacillus iheyensis (strain DSM 14371 / CIP 107618 / JCM 11309 / KCTC 3954 / HTE831).